A 282-amino-acid polypeptide reads, in one-letter code: Putative hydrolase BamMC406_5393 (282 aa).

Mg(2+) is bound by residues Glu-124, Glu-126, and Asp-155.

Belongs to the FAH family. Mg(2+) serves as cofactor.

The polypeptide is Putative hydrolase BamMC406_5393 (Burkholderia ambifaria (strain MC40-6)).